Here is a 481-residue protein sequence, read N- to C-terminus: Cysteine--tRNA ligase (481 aa).

Cys-29 is a binding site for Zn(2+). The 'HIGH' region motif lies at Pro-31–His-41. Residues Cys-210, His-235, and Glu-239 each contribute to the Zn(2+) site. The 'KMSKS' region motif lies at Lys-272 to Ser-276. ATP is bound at residue Lys-275.

Belongs to the class-I aminoacyl-tRNA synthetase family. In terms of assembly, monomer. Zn(2+) is required as a cofactor.

It is found in the cytoplasm. The enzyme catalyses tRNA(Cys) + L-cysteine + ATP = L-cysteinyl-tRNA(Cys) + AMP + diphosphate. The polypeptide is Cysteine--tRNA ligase (Anaeromyxobacter dehalogenans (strain 2CP-1 / ATCC BAA-258)).